The sequence spans 173 residues: CASP-like protein 2D1 (173 aa).

Residues 1 to 9 lie on the Cytoplasmic side of the membrane; that stretch reads MAPLLKLLD. Residues 10–29 form a helical membrane-spanning segment; the sequence is SSLRVSVIPLSAATIWLTVT. At 30 to 50 the chain is on the extracellular side; sequence NHQDNSSYGNLKYSNIMGLKY. The N-linked (GlcNAc...) asparagine glycan is linked to asparagine 34. The helical transmembrane segment at 51–71 threads the bilayer; sequence MVCISAICASYAFVAAVSIWI. Residues 72–86 are Cytoplasmic-facing; sequence KCLVNKVWLFFVSDQ. The chain crosses the membrane as a helical span at residues 87–107; that stretch reads IIAYLMVTSVAAAMEILYIAY. The Extracellular portion of the chain corresponds to 108–131; that stretch reads NGDQKVTWSEACTSYGKFCNGMKT. A helical transmembrane segment spans residues 132–152; it reads ALILHALTLCFFIVLAVISAY. Residues 153–173 lie on the Cytoplasmic side of the membrane; sequence RAFSMYQPPVSSKETVEGDAT.

The protein belongs to the Casparian strip membrane proteins (CASP) family. In terms of assembly, homodimer and heterodimers.

The protein localises to the cell membrane. The chain is CASP-like protein 2D1 from Ricinus communis (Castor bean).